The following is a 1087-amino-acid chain: Kinesin-like protein KIN-14F (1087 aa).

In terms of domain architecture, Calponin-homology (CH) spans M1–E110. Residues S136 to L155 form a disordered region. In terms of domain architecture, Kinesin motor spans T377–I705. G461–T468 is a binding site for ATP. A coiled-coil region spans residues A710–R749. Disordered regions lie at residues L740–R858, Q923–L949, and D1004–P1087. Composition is skewed to polar residues over residues R744 to C754, P780 to G797, and T836 to V856. Residues E1017–S1033 show a composition bias toward polar residues. Over residues Y1042 to P1054 the composition is skewed to basic and acidic residues. The segment covering S1076–P1087 has biased composition (basic residues).

The protein belongs to the TRAFAC class myosin-kinesin ATPase superfamily. Kinesin family. KIN-14 subfamily. In terms of assembly, interacts (via C-terminus) with VDAC3. In terms of tissue distribution, expressed in roots, leaves, stems and flowers (at protein level).

The protein localises to the cytoplasm. It is found in the cytoskeleton. It localises to the mitochondrion. In terms of biological role, required for keeping the ATP levels stable and balancing the aerobic respiration pathways during seed germination at low temperature. This is Kinesin-like protein KIN-14F from Arabidopsis thaliana (Mouse-ear cress).